We begin with the raw amino-acid sequence, 319 residues long: HTH-type transcriptional regulator YidZ (319 aa).

In terms of domain architecture, HTH lysR-type spans 8–65 (LDLNLLLCLQLLMQERSVTKAAKRMNVTPSAVSKSLAKLRAWFDDPLFVNSPLGLSPT). Positions 25 to 44 (VTKAAKRMNVTPSAVSKSLA) form a DNA-binding region, H-T-H motif.

Belongs to the LysR transcriptional regulatory family.

Its function is as follows. Involved in anaerobic NO protection. The polypeptide is HTH-type transcriptional regulator YidZ (Escherichia coli O139:H28 (strain E24377A / ETEC)).